The sequence spans 62 residues: Defensin-like protein A (62 aa).

The signal sequence occupies residues 1–26 (MRCVVLFMVSCLLIVLLINHFEEVEA). The cysteines at positions 42 and 52 are disulfide-linked.

This sequence belongs to the DEFL family.

It is found in the secreted. In terms of biological role, truncated and inactivated form of SCRA, a protein involved in male-mediated self-incompatibility when active. Most A.thaliana cultivars contain such an inactive form and thus, are self-fertiles. The polypeptide is Defensin-like protein A (SCRA) (Arabidopsis thaliana (Mouse-ear cress)).